Reading from the N-terminus, the 421-residue chain is Imidazolonepropionase (421 aa).

Fe(3+) is bound by residues His-81 and His-83. The Zn(2+) site is built by His-81 and His-83. Positions 90, 153, and 186 each coordinate 4-imidazolone-5-propanoate. An N-formimidoyl-L-glutamate-binding site is contributed by Tyr-153. His-251 contacts Fe(3+). His-251 lines the Zn(2+) pocket. Glu-254 contributes to the 4-imidazolone-5-propanoate binding site. Asp-326 serves as a coordination point for Fe(3+). Asp-326 is a Zn(2+) binding site. Residues Asn-328 and Gly-330 each contribute to the N-formimidoyl-L-glutamate site. 4-imidazolone-5-propanoate is bound at residue Ser-331.

Belongs to the metallo-dependent hydrolases superfamily. HutI family. Requires Zn(2+) as cofactor. Fe(3+) serves as cofactor.

It is found in the cytoplasm. It carries out the reaction 4-imidazolone-5-propanoate + H2O = N-formimidoyl-L-glutamate. It functions in the pathway amino-acid degradation; L-histidine degradation into L-glutamate; N-formimidoyl-L-glutamate from L-histidine: step 3/3. Its function is as follows. Catalyzes the hydrolytic cleavage of the carbon-nitrogen bond in imidazolone-5-propanoate to yield N-formimidoyl-L-glutamate. It is the third step in the universal histidine degradation pathway. This is Imidazolonepropionase from Streptococcus pyogenes serotype M18 (strain MGAS8232).